The chain runs to 435 residues: Histidine--tRNA ligase (435 aa).

This sequence belongs to the class-II aminoacyl-tRNA synthetase family. In terms of assembly, homodimer.

The protein resides in the cytoplasm. It carries out the reaction tRNA(His) + L-histidine + ATP = L-histidyl-tRNA(His) + AMP + diphosphate + H(+). The sequence is that of Histidine--tRNA ligase from Synechococcus elongatus (strain ATCC 33912 / PCC 7942 / FACHB-805) (Anacystis nidulans R2).